Here is a 640-residue protein sequence, read N- to C-terminus: MPTITLPDGSQRSFDQAVSVADVALSIGAGLAKATVAGKVDGKLVDACDLIENDASLQIITPKDQEGLEIIRHSCAHLVGHAVKQLYPTAKMVIGPVIDDGFYYDIAYERPFTPDDMAAIEQRMQQLIEKDYDVIKKVTPRAEVIEVFTARHEDYKLRLVEDMPSEQAMGLYYHEEYVDMCRGPHVPNTRFLKSFKLTKLSGAYWRGDAKNEQLQRVYGTAWADKKQLAAYIQRIEEAEKRDHRKIGKRLGLFHTQEEAPGMVFWHPQGWTLYQVLEQYMRKVQRENGYLEIKTPQVVDRSLWEKSGHWANYADNMFTTESESRDYAIKPMNCPCHVQVFNQGLKSYRELPMRLAEFGACHRNEPSGALHGIMRVRGFTQDDAHIFCTEDQMQAESAAFIKLTLDVYADFGFKDIELKLSTRPEKRVGSDELWDRAESALASALDSAGLPYDLQPGEGAFYGPKIEFSLKDCLGRVWQCGTLQLDFNLPIRLSAEYVSEDNSRKNPVMLHRAILGSFERFIGILIEHYEGAFPAWLAPTQAVIMNITDKQADFALEVEKTLAESGFRAKSDLRNEKIGFKIREHTLLKVPYLLVIGDREVEMQTVAVRTREGADLGSMPVAQFAEFLAQAVSRRGRQDTE.

Residues 1–61 (MPTITLPDGS…ENDASLQIIT (61 aa)) enclose the TGS domain. Positions 242 to 533 (DHRKIGKRLG…LIEHYEGAFP (292 aa)) are catalytic. Zn(2+)-binding residues include Cys333, His384, and His510.

Belongs to the class-II aminoacyl-tRNA synthetase family. In terms of assembly, homodimer. The cofactor is Zn(2+).

The protein localises to the cytoplasm. It carries out the reaction tRNA(Thr) + L-threonine + ATP = L-threonyl-tRNA(Thr) + AMP + diphosphate + H(+). Catalyzes the attachment of threonine to tRNA(Thr) in a two-step reaction: L-threonine is first activated by ATP to form Thr-AMP and then transferred to the acceptor end of tRNA(Thr). Also edits incorrectly charged L-seryl-tRNA(Thr). This is Threonine--tRNA ligase from Pseudomonas syringae pv. syringae (strain B728a).